A 723-amino-acid chain; its full sequence is Fatty acid oxidation complex subunit alpha (723 aa).

Positions 1–189 are enoyl-CoA hydratase/isomerase; that stretch reads MIYQAETLQV…KIGLLDAVVD (189 aa). Position 296 (Asp-296) interacts with substrate. The interval 311–723 is 3-hydroxyacyl-CoA dehydrogenase; it reads NKETQRAAVL…FYGAQQQGSI (413 aa). Residues Met-325, Asp-344, 401–403, Lys-408, and Ser-430 each bind NAD(+); that span reads VVE. His-451 serves as the catalytic For 3-hydroxyacyl-CoA dehydrogenase activity. Asn-454 is an NAD(+) binding site. Residues Asn-501 and Tyr-661 each contribute to the substrate site.

It in the N-terminal section; belongs to the enoyl-CoA hydratase/isomerase family. This sequence in the C-terminal section; belongs to the 3-hydroxyacyl-CoA dehydrogenase family. Heterotetramer of two alpha chains (FadB) and two beta chains (FadA).

It carries out the reaction a (3S)-3-hydroxyacyl-CoA + NAD(+) = a 3-oxoacyl-CoA + NADH + H(+). The catalysed reaction is a (3S)-3-hydroxyacyl-CoA = a (2E)-enoyl-CoA + H2O. The enzyme catalyses a 4-saturated-(3S)-3-hydroxyacyl-CoA = a (3E)-enoyl-CoA + H2O. It catalyses the reaction (3S)-3-hydroxybutanoyl-CoA = (3R)-3-hydroxybutanoyl-CoA. It carries out the reaction a (3Z)-enoyl-CoA = a 4-saturated (2E)-enoyl-CoA. The catalysed reaction is a (3E)-enoyl-CoA = a 4-saturated (2E)-enoyl-CoA. The protein operates within lipid metabolism; fatty acid beta-oxidation. Its function is as follows. Involved in the aerobic and anaerobic degradation of long-chain fatty acids via beta-oxidation cycle. Catalyzes the formation of 3-oxoacyl-CoA from enoyl-CoA via L-3-hydroxyacyl-CoA. It can also use D-3-hydroxyacyl-CoA and cis-3-enoyl-CoA as substrate. The sequence is that of Fatty acid oxidation complex subunit alpha from Vibrio vulnificus (strain CMCP6).